A 286-amino-acid polypeptide reads, in one-letter code: 4-diphosphocytidyl-2-C-methyl-D-erythritol kinase (286 aa).

The active site involves K11. 93 to 103 (PFGAGLGGGSS) lines the ATP pocket. D135 is a catalytic residue.

The protein belongs to the GHMP kinase family. IspE subfamily.

The enzyme catalyses 4-CDP-2-C-methyl-D-erythritol + ATP = 4-CDP-2-C-methyl-D-erythritol 2-phosphate + ADP + H(+). It participates in isoprenoid biosynthesis; isopentenyl diphosphate biosynthesis via DXP pathway; isopentenyl diphosphate from 1-deoxy-D-xylulose 5-phosphate: step 3/6. Catalyzes the phosphorylation of the position 2 hydroxy group of 4-diphosphocytidyl-2C-methyl-D-erythritol. The sequence is that of 4-diphosphocytidyl-2-C-methyl-D-erythritol kinase from Chlorobaculum parvum (strain DSM 263 / NCIMB 8327) (Chlorobium vibrioforme subsp. thiosulfatophilum).